A 60-amino-acid polypeptide reads, in one-letter code: Large ribosomal subunit protein bL32 (60 aa).

Positions 1–19 (MAVPKRRTSKRRKRARNTH) are enriched in basic residues. Residues 1-20 (MAVPKRRTSKRRKRARNTHK) form a disordered region.

It belongs to the bacterial ribosomal protein bL32 family.

In Gemmatimonas aurantiaca (strain DSM 14586 / JCM 11422 / NBRC 100505 / T-27), this protein is Large ribosomal subunit protein bL32.